Consider the following 527-residue polypeptide: Inosine-5'-monophosphate dehydrogenase (527 aa).

CBS domains follow at residues 121–183 (FILD…VTAV) and 184–240 (MSTD…PLAS). Residues 277–279 (DSS) and 327–329 (GMG) contribute to the NAD(+) site. Residues G329 and G331 each coordinate K(+). S332 is an IMP binding site. C334 is a binding site for K(+). C334 (thioimidate intermediate) is an active-site residue. IMP is bound by residues 367–369 (DGG) and 390–391 (GS). R440 serves as the catalytic Proton acceptor. An IMP-binding site is contributed by Q452. The interval 506–527 (ASAQTEGNVHGLHSHEKKLYSS) is disordered. K(+) contacts are provided by E511 and G512. A compositionally biased stretch (basic and acidic residues) spans 518–527 (HSHEKKLYSS).

This sequence belongs to the IMPDH/GMPR family. In terms of assembly, homotetramer. Requires K(+) as cofactor.

The protein resides in the cytoplasm. It carries out the reaction IMP + NAD(+) + H2O = XMP + NADH + H(+). Its pathway is purine metabolism; XMP biosynthesis via de novo pathway; XMP from IMP: step 1/1. Its activity is regulated as follows. Mycophenolic acid (MPA) is a non-competitive inhibitor that prevents formation of the closed enzyme conformation by binding to the same site as the amobile flap. In contrast, mizoribine monophosphate (MZP) is a competitive inhibitor that induces the closed conformation. MPA is a potent inhibitor of mammalian IMPDHs but a poor inhibitor of the bacterial enzymes. MZP is a more potent inhibitor of bacterial IMPDH. Its function is as follows. Catalyzes the conversion of inosine 5'-phosphate (IMP) to xanthosine 5'-phosphate (XMP), the first committed and rate-limiting step in the de novo synthesis of guanine nucleotides, and therefore plays an important role in the regulation of cell growth. Part of the gene cluster that mediates the biosynthesis of mycophenolic acid (MPA), the first isolated antibiotic natural product in the world. Does not play a role in the biosynthesis of MPA, but is involved in self resistance to MPA, since MPA acts as an inhibitor of IMP dehydrogenases. The sequence is that of Inosine-5'-monophosphate dehydrogenase from Penicillium brevicompactum.